Consider the following 126-residue polypeptide: uncharacterized protein (126 aa).

Topologically, residues 1-9 (MCTYIITQS) are extracellular. Residues 10-30 (FFFLPCLSFLFFKLVGFFDSV) traverse the membrane as a helical segment. Topologically, residues 31–73 (FTAGKSLRIMFELPIFDKLTSCFAAIDCSATSLDIPFAEEELF) are cytoplasmic. A helical transmembrane segment spans residues 74–94 (LMLVSEPVLIPFLFVFEFMLI). Topologically, residues 95 to 126 (CKPCGSRSRFGFPVKNVSDFEETLEFDPTLLV) are extracellular.

The protein localises to the membrane. This is an uncharacterized protein from Saccharomyces cerevisiae (strain ATCC 204508 / S288c) (Baker's yeast).